A 235-amino-acid polypeptide reads, in one-letter code: MKIDLIISASDIKEEKIKNKTVVVIDILRATSVIVTALNNGCNEVIPVLEVEDAMKIVKDNRKKYILGGERNALKIEGFDFSNSPLDYTKDVVKDKTLVMTTTNGTRAIHGAMSAKNILIGAMINARSIANKVLELDNDLIIINSGTNGEFSIDDFVCAGYIIDCILKNRDAELSDIAITAHYVYSENKDIHSFVHKAKHYNILSNLGLKDDINYCCSKDIVDIVPEFHYPKITK.

It belongs to the ComB family. Mg(2+) serves as cofactor.

It carries out the reaction (2R)-O-phospho-3-sulfolactate + H2O = (2R)-3-sulfolactate + phosphate. In Clostridium novyi (strain NT), this protein is Probable 2-phosphosulfolactate phosphatase.